The following is a 506-amino-acid chain: UDP-N-acetylmuramoylalanine--D-glutamate ligase (506 aa).

Residue 128 to 134 (GTNGKTT) participates in ATP binding.

The protein belongs to the MurCDEF family.

The protein resides in the cytoplasm. It carries out the reaction UDP-N-acetyl-alpha-D-muramoyl-L-alanine + D-glutamate + ATP = UDP-N-acetyl-alpha-D-muramoyl-L-alanyl-D-glutamate + ADP + phosphate + H(+). Its pathway is cell wall biogenesis; peptidoglycan biosynthesis. In terms of biological role, cell wall formation. Catalyzes the addition of glutamate to the nucleotide precursor UDP-N-acetylmuramoyl-L-alanine (UMA). The protein is UDP-N-acetylmuramoylalanine--D-glutamate ligase of Albidiferax ferrireducens (strain ATCC BAA-621 / DSM 15236 / T118) (Rhodoferax ferrireducens).